The primary structure comprises 284 residues: Efem/EfeO family lipoprotein (284 aa).

Positions 1-17 (MKKLTTLLLASTLLIAA) are cleaved as a signal peptide. The N-palmitoyl cysteine moiety is linked to residue C18. A lipid anchor (S-diacylglycerol cysteine) is attached at C18.

It belongs to the EfeM/EfeO family.

It localises to the cell membrane. The chain is Efem/EfeO family lipoprotein from Staphylococcus aureus (strain MRSA252).